We begin with the raw amino-acid sequence, 140 residues long: Chorion class A protein Ld2/Ld41 (140 aa).

The first 21 residues, 1–21, serve as a signal peptide directing secretion; the sequence is MNSFAFLLVCIQACLVQSVFS.

Belongs to the chorion protein family.

In terms of biological role, this protein is one of many from the eggshell of the gypsy moth. The protein is Chorion class A protein Ld2/Ld41 of Lymantria dispar (Gypsy moth).